A 343-amino-acid chain; its full sequence is Labda-7,13(16),14-triene synthase (343 aa).

Mg(2+)-binding residues include Asp-114 and Glu-119. The DDXXXE motif motif lies at 114 to 119; that stretch reads DDVHVE. Position 206 (Arg-206) interacts with substrate. The Mg(2+) site is built by Asn-252, Ser-256, and Glu-260. Residues 252–260 carry the NXXXSXXXE motif motif; sequence NDLYSFAYE.

It belongs to the terpene synthase family. Mg(2+) serves as cofactor.

It catalyses the reaction (13E)-labda-7,13-dien-15-yl diphosphate = labda-7,13(16),14-triene + diphosphate. Its function is as follows. Involved in the biosynthesis of the labdane-type bicyclic diterpene labda-7,13(16),14-triene. Catalyzes the conversion of labda-7,13(E)-dienyl diphosphate to yield labda-7,13(16),14-triene. The chain is Labda-7,13(16),14-triene synthase from Streptomyces clavuligerus.